The chain runs to 652 residues: 1,4-alpha-glucan branching enzyme GlgB (652 aa).

The Nucleophile role is filled by Asp322. Residue Glu373 is the Proton donor of the active site.

Belongs to the glycosyl hydrolase 13 family. GlgB subfamily. As to quaternary structure, monomer.

It carries out the reaction Transfers a segment of a (1-&gt;4)-alpha-D-glucan chain to a primary hydroxy group in a similar glucan chain.. The protein operates within glycan biosynthesis; glycogen biosynthesis. In terms of biological role, catalyzes the formation of the alpha-1,6-glucosidic linkages in glycogen by scission of a 1,4-alpha-linked oligosaccharide from growing alpha-1,4-glucan chains and the subsequent attachment of the oligosaccharide to the alpha-1,6 position. In Deinococcus geothermalis (strain DSM 11300 / CIP 105573 / AG-3a), this protein is 1,4-alpha-glucan branching enzyme GlgB.